Here is a 636-residue protein sequence, read N- to C-terminus: Threonine--tRNA ligase (636 aa).

One can recognise a TGS domain in the interval 1–61 (MPVITLPDGS…TQDASLQLIT (61 aa)). The interval 243 to 534 (DHRKIGKTLD…LIEEFTGKFP (292 aa)) is catalytic. Cys334, His385, and His511 together coordinate Zn(2+).

It belongs to the class-II aminoacyl-tRNA synthetase family. Homodimer. It depends on Zn(2+) as a cofactor.

The protein resides in the cytoplasm. The catalysed reaction is tRNA(Thr) + L-threonine + ATP = L-threonyl-tRNA(Thr) + AMP + diphosphate + H(+). Its function is as follows. Catalyzes the attachment of threonine to tRNA(Thr) in a two-step reaction: L-threonine is first activated by ATP to form Thr-AMP and then transferred to the acceptor end of tRNA(Thr). Also edits incorrectly charged L-seryl-tRNA(Thr). The chain is Threonine--tRNA ligase from Colwellia psychrerythraea (strain 34H / ATCC BAA-681) (Vibrio psychroerythus).